Reading from the N-terminus, the 73-residue chain is Cytochrome b559 subunit alpha (73 aa).

A helical transmembrane segment spans residues 21-35 (IIHSITVPSLFIAGW). Residue His-23 participates in heme binding.

It belongs to the PsbE/PsbF family. As to quaternary structure, heterodimer of an alpha subunit and a beta subunit. PSII is composed of 1 copy each of membrane proteins PsbA, PsbB, PsbC, PsbD, PsbE, PsbF, PsbH, PsbI, PsbJ, PsbK, PsbL, PsbM, PsbT, PsbY, PsbZ, Psb30/Ycf12, at least 3 peripheral proteins of the oxygen-evolving complex and a large number of cofactors. It forms dimeric complexes. The cofactor is heme b.

The protein localises to the plastid. It is found in the chloroplast thylakoid membrane. Its function is as follows. This b-type cytochrome is tightly associated with the reaction center of photosystem II (PSII). PSII is a light-driven water:plastoquinone oxidoreductase that uses light energy to abstract electrons from H(2)O, generating O(2) and a proton gradient subsequently used for ATP formation. It consists of a core antenna complex that captures photons, and an electron transfer chain that converts photonic excitation into a charge separation. In Bigelowiella natans (Pedinomonas minutissima), this protein is Cytochrome b559 subunit alpha.